The sequence spans 456 residues: Rap guanine nucleotide exchange factor-like 1 (456 aa).

The Ras-GEF domain occupies 218–454 (EPEDVANHLT…FELSYKLEAN (237 aa)).

In terms of biological role, probable guanine nucleotide exchange factor (GEF). This Pongo pygmaeus (Bornean orangutan) protein is Rap guanine nucleotide exchange factor-like 1 (RAPGEFL1).